We begin with the raw amino-acid sequence, 711 residues long: Polyribonucleotide nucleotidyltransferase (711 aa).

2 residues coordinate Mg(2+): Asp494 and Asp500. A KH domain is found at 560-620 (PKIEIFGVDP…INVENAKSDI (61 aa)). The S1 motif domain occupies 651 to 710 (GEEFDGVVKKIMDFGAFISLKDGIDGLLHVSKIKTQLSEGDTLRVKVEEIKRGKISLELC).

The protein belongs to the polyribonucleotide nucleotidyltransferase family. It depends on Mg(2+) as a cofactor.

The protein localises to the cytoplasm. The enzyme catalyses RNA(n+1) + phosphate = RNA(n) + a ribonucleoside 5'-diphosphate. Involved in mRNA degradation. Catalyzes the phosphorolysis of single-stranded polyribonucleotides processively in the 3'- to 5'-direction. The polypeptide is Polyribonucleotide nucleotidyltransferase (Campylobacter hominis (strain ATCC BAA-381 / DSM 21671 / CCUG 45161 / LMG 19568 / NCTC 13146 / CH001A)).